Consider the following 257-residue polypeptide: uncharacterized protein (257 aa).

The chain crosses the membrane as a helical span at residues 6–26; the sequence is IFWLNLAAIIIISIVVSGDMF.

The protein belongs to the staphylococcal tandem lipoprotein family.

It localises to the cell membrane. This is an uncharacterized protein from Staphylococcus aureus (strain COL).